Reading from the N-terminus, the 66-residue chain is Small archaeal modifier protein 2 (66 aa).

A Glycyl lysine isopeptide (Lys-Gly) (interchain with G-Cter in SAMP2) cross-link involves residue lysine 58. A 1-thioglycine; alternate modification is found at glycine 66. Glycine 66 is modified (glycyl adenylate; alternate). A Glycyl lysine isopeptide (Gly-Lys) (interchain with K-? in acceptor proteins); alternate cross-link involves residue glycine 66.

In terms of assembly, monomer. Monomeric and polymeric forms interact with NcsA. Post-translationally, the C-terminal glycine is likely acyl-adenylated (-COAMP) by UbaA, and also probably thiocarboxylated (-COSH) to function in sulfur transfer.

Its function is as follows. Functions as a protein modifier covalently attached to lysine residues of substrate proteins, as well as a sulfur carrier in tRNA thiolation. The protein modification process is termed sampylation and involves the formation of an isopeptide bond between the SAMP2 C-terminal glycine carboxylate and the epsilon-amino group of lysine residues on target proteins. Is able to form polymeric chains with itself at Lys-58, similar to ubiquitin and other ubiquitin-like proteins. May serve as a proteolytic signal in the cell to target proteins for degradation by proteasomes. This Haloferax volcanii (strain ATCC 29605 / DSM 3757 / JCM 8879 / NBRC 14742 / NCIMB 2012 / VKM B-1768 / DS2) (Halobacterium volcanii) protein is Small archaeal modifier protein 2 (samp2).